The sequence spans 376 residues: Carbapenem antibiotics biosynthesis protein CarD (376 aa).

Belongs to the proline oxidase family.

The protein operates within antibiotic biosynthesis; carbapenem biosynthesis. The chain is Carbapenem antibiotics biosynthesis protein CarD (carD) from Pectobacterium carotovorum subsp. carotovorum (Erwinia carotovora subsp. carotovora).